The primary structure comprises 438 residues: tRNA modification GTPase MnmE (438 aa).

Residues arginine 20, glutamate 76, and lysine 115 each coordinate (6S)-5-formyl-5,6,7,8-tetrahydrofolate. The 161-residue stretch at 210-370 (NFTIMILGRR…LKCFINKIVD (161 aa)) folds into the TrmE-type G domain. Position 220 (asparagine 220) interacts with K(+). GTP is bound by residues 220 to 225 (NVGKST), 239 to 245 (TNIPGTT), and 264 to 267 (DTAG). Serine 224 contacts Mg(2+). K(+) contacts are provided by threonine 239, isoleucine 241, and threonine 244. Threonine 245 is a binding site for Mg(2+). Position 438 (lysine 438) interacts with (6S)-5-formyl-5,6,7,8-tetrahydrofolate.

It belongs to the TRAFAC class TrmE-Era-EngA-EngB-Septin-like GTPase superfamily. TrmE GTPase family. As to quaternary structure, homodimer. Heterotetramer of two MnmE and two MnmG subunits. K(+) is required as a cofactor.

The protein localises to the cytoplasm. Its function is as follows. Exhibits a very high intrinsic GTPase hydrolysis rate. Involved in the addition of a carboxymethylaminomethyl (cmnm) group at the wobble position (U34) of certain tRNAs, forming tRNA-cmnm(5)s(2)U34. This Carsonella ruddii (strain PV) protein is tRNA modification GTPase MnmE.